Reading from the N-terminus, the 216-residue chain is Tail fiber protein p36 (216 aa).

In terms of assembly, the distal half-fiber contains two molecules each of Gp36 and Gp37 and one molecule of Gp35.

Its subcellular location is the virion. Functionally, structural component of the distal-half tail fiber. The protein is Tail fiber protein p36 (36) of Enterobacteria phage Ox2 (Bacteriophage Ox2).